A 437-amino-acid polypeptide reads, in one-letter code: tRNA-2-methylthio-N(6)-dimethylallyladenosine synthase (437 aa).

An MTTase N-terminal domain is found at Met1 to Ala115. [4Fe-4S] cluster is bound by residues Cys10, Cys46, Cys78, Cys148, Cys152, and Cys155. The 234-residue stretch at Lys134–Glu367 folds into the Radical SAM core domain. The TRAM domain occupies Lys370 to Gly436.

Belongs to the methylthiotransferase family. MiaB subfamily. As to quaternary structure, monomer. [4Fe-4S] cluster is required as a cofactor.

It localises to the cytoplasm. It carries out the reaction N(6)-dimethylallyladenosine(37) in tRNA + (sulfur carrier)-SH + AH2 + 2 S-adenosyl-L-methionine = 2-methylsulfanyl-N(6)-dimethylallyladenosine(37) in tRNA + (sulfur carrier)-H + 5'-deoxyadenosine + L-methionine + A + S-adenosyl-L-homocysteine + 2 H(+). Functionally, catalyzes the methylthiolation of N6-(dimethylallyl)adenosine (i(6)A), leading to the formation of 2-methylthio-N6-(dimethylallyl)adenosine (ms(2)i(6)A) at position 37 in tRNAs that read codons beginning with uridine. In Helicobacter pylori (strain J99 / ATCC 700824) (Campylobacter pylori J99), this protein is tRNA-2-methylthio-N(6)-dimethylallyladenosine synthase.